The primary structure comprises 398 residues: Succinate--CoA ligase [ADP-forming] subunit beta (398 aa).

Residues lysine 9–glutamate 254 enclose the ATP-grasp domain. Residues lysine 46, glycine 53 to glycine 55, glutamate 109, alanine 112, and glutamate 117 contribute to the ATP site. Asparagine 209 and aspartate 223 together coordinate Mg(2+). Substrate is bound by residues asparagine 274 and glycine 331–methionine 333.

It belongs to the succinate/malate CoA ligase beta subunit family. Heterotetramer of two alpha and two beta subunits. Mg(2+) serves as cofactor.

The enzyme catalyses succinate + ATP + CoA = succinyl-CoA + ADP + phosphate. It catalyses the reaction GTP + succinate + CoA = succinyl-CoA + GDP + phosphate. Its pathway is carbohydrate metabolism; tricarboxylic acid cycle; succinate from succinyl-CoA (ligase route): step 1/1. In terms of biological role, succinyl-CoA synthetase functions in the citric acid cycle (TCA), coupling the hydrolysis of succinyl-CoA to the synthesis of either ATP or GTP and thus represents the only step of substrate-level phosphorylation in the TCA. The beta subunit provides nucleotide specificity of the enzyme and binds the substrate succinate, while the binding sites for coenzyme A and phosphate are found in the alpha subunit. The chain is Succinate--CoA ligase [ADP-forming] subunit beta from Bartonella quintana (strain Toulouse) (Rochalimaea quintana).